A 318-amino-acid chain; its full sequence is NADH-ubiquinone oxidoreductase chain 1 (318 aa).

8 helical membrane passes run 2 to 22 (FLTNLLMTIAPVLLAVAFLTL), 70 to 90 (MFLMAPTLALALALTMWIPLP), 102 to 122 (LLFMLAMSSLAVYAILWSGWA), 147 to 167 (AIILLSVLLLSGSYSLSTLII), 171 to 191 (YMWLILPSWPLAMMWFISTLA), 222 to 242 (LFFLAEYTNIIMMNALTTILF), 253 to 273 (ELYTINFTTKTLLLTMAFLWI), and 294 to 314 (LPLTLALCMWYTALPIITAAI).

Belongs to the complex I subunit 1 family.

It is found in the mitochondrion inner membrane. The catalysed reaction is a ubiquinone + NADH + 5 H(+)(in) = a ubiquinol + NAD(+) + 4 H(+)(out). In terms of biological role, core subunit of the mitochondrial membrane respiratory chain NADH dehydrogenase (Complex I) that is believed to belong to the minimal assembly required for catalysis. Complex I functions in the transfer of electrons from NADH to the respiratory chain. The immediate electron acceptor for the enzyme is believed to be ubiquinone. The polypeptide is NADH-ubiquinone oxidoreductase chain 1 (MT-ND1) (Diaemus youngi (White-winged vampire bat)).